We begin with the raw amino-acid sequence, 889 residues long: MADITVAELAKEIGTPVDRLVTQLADSGVNKSATDAISQDEKEALLGHLKKQHGDESEAKPNKLTLNRKTKSTLTMGHGSKAKSVNVEVRKKRTYVKRSEVEDEKLAEEAAKAEAEAAILAEADAKAKAEAAAKEAENEKGVAAAKAEVEAERKAEAKIEAAAKAKIAAVEKAKNVEQAPEKVAETEEAKKLRLAQEKETLAKVEAEAAAAAEAAKKLAEENEGRWKEQEAERKAKEKEVVHLTSSVYAQEAEDKSDSADESGRRRKKKKAPDRNARGRNSGRGKGKTLSSPQSLKHGFTKPVETKLQDIRIGETISVAELANKMSKKGAEVVKAMFKLGAMATINQVIDQETAALVAEDMGFEVVLVKENALEEAVLADRNDTGEEITRAPVVTIMGHVDHGKTSLLDHIREAKVADGEAGGITQHIGAYHVETGHGMITFLDTPGHAAFTAMRSRGAKATDIVVIVVAADDGVMPQTIEAIQHAQASEAPIIIAVNKMDKESADPDRVKSELSQHGVLSEEWGGEVQFCHVSAKTGLGIDELLDSILLQSEVLELTAVVDKMANGVVVESKLDKGRGPVATVLVQEGTLKQGDIVLCGLEYGRVRAMRDENGKTIQSAGPSIPVEIIGLSGVPISGDEATVVKDEKKAREVALFRQGKFRDVKLARQQKAKLENMFASMAEGDISEVNVVIKSDVQGSLEAISDSLLKLSTDEVKVKIIGSGVGAITETDATLAAASNAIVVGFNVRADASARKVIESENIDLRYYSVIYALIEEVKQAMSGMLAPEFKQEIIGLAQVRDVFKSPKIGAIAGCMVTEGVIKRSAPIRVLRENVVIYEGELESLRRFKDDVQEVRNGTECGIGVKNYNDVRVGDQIEVFETIEIKRSL.

2 disordered regions span residues 47 to 85 (GHLK…AKSV) and 206 to 302 (AEAA…FTKP). Composition is skewed to basic and acidic residues over residues 52–61 (QHGDESEAKP), 214–241 (AAKK…KEVV), and 252–263 (AEDKSDSADESG). The 170-residue stretch at 389 to 558 (TRAPVVTIMG…LLQSEVLELT (170 aa)) folds into the tr-type G domain. The G1 stretch occupies residues 398-405 (GHVDHGKT). Position 398–405 (398–405 (GHVDHGKT)) interacts with GTP. The segment at 423-427 (GITQH) is G2. Residues 444-447 (DTPG) form a G3 region. GTP-binding positions include 444–448 (DTPGH) and 498–501 (NKMD). The interval 498-501 (NKMD) is G4. Residues 534-536 (SAK) form a G5 region.

This sequence belongs to the TRAFAC class translation factor GTPase superfamily. Classic translation factor GTPase family. IF-2 subfamily.

It localises to the cytoplasm. Its function is as follows. One of the essential components for the initiation of protein synthesis. Protects formylmethionyl-tRNA from spontaneous hydrolysis and promotes its binding to the 30S ribosomal subunits. Also involved in the hydrolysis of GTP during the formation of the 70S ribosomal complex. The chain is Translation initiation factor IF-2 from Colwellia psychrerythraea (strain 34H / ATCC BAA-681) (Vibrio psychroerythus).